The sequence spans 284 residues: Pantothenate synthetase (284 aa).

ATP is bound at residue 31–38 (MGNLHAGH). Residue H38 is the Proton donor of the active site. Q62 contacts (R)-pantoate. Q62 is a binding site for beta-alanine. 150 to 153 (GKKD) is an ATP binding site. Position 156 (Q156) interacts with (R)-pantoate. ATP contacts are provided by residues V179 and 187–190 (MSSR).

Belongs to the pantothenate synthetase family. As to quaternary structure, homodimer.

The protein resides in the cytoplasm. It carries out the reaction (R)-pantoate + beta-alanine + ATP = (R)-pantothenate + AMP + diphosphate + H(+). The protein operates within cofactor biosynthesis; (R)-pantothenate biosynthesis; (R)-pantothenate from (R)-pantoate and beta-alanine: step 1/1. In terms of biological role, catalyzes the condensation of pantoate with beta-alanine in an ATP-dependent reaction via a pantoyl-adenylate intermediate. The chain is Pantothenate synthetase from Xanthomonas campestris pv. campestris (strain 8004).